We begin with the raw amino-acid sequence, 222 residues long: Small ribosomal subunit protein uS3 (222 aa).

The region spanning 38–106 is the KH type-2 domain; the sequence is IRKFISEKLA…NVHINIVEIK (69 aa).

The protein belongs to the universal ribosomal protein uS3 family. As to quaternary structure, part of the 30S ribosomal subunit. Forms a tight complex with proteins S10 and S14.

Binds the lower part of the 30S subunit head. Binds mRNA in the 70S ribosome, positioning it for translation. This Lactobacillus johnsonii (strain CNCM I-12250 / La1 / NCC 533) protein is Small ribosomal subunit protein uS3.